The primary structure comprises 221 residues: Zingipain-1 (221 aa).

Cystine bridges form between Cys24-Cys65, Cys58-Cys98, and Cys155-Cys206. The active site involves Cys27. Asn95 and Asn156 each carry an N-linked (GlcNAc...) asparagine glycan. Residues His161 and Asn181 contribute to the active site.

This sequence belongs to the peptidase C1 family.

It catalyses the reaction Preferential cleavage of peptides with a proline residue at the P2 position.. Functionally, cysteine proteinase with a high level of diversity in substrate specificity, an amino acid bearing a proline residue at the P2 position is preferred. This chain is Zingipain-1, found in Zingiber officinale (Ginger).